A 72-amino-acid polypeptide reads, in one-letter code: Translation initiation factor IF-1 (72 aa).

Positions 1-72 (MAKSDVIEVD…DKGRITYRYK (72 aa)) constitute an S1-like domain.

It belongs to the IF-1 family. As to quaternary structure, component of the 30S ribosomal translation pre-initiation complex which assembles on the 30S ribosome in the order IF-2 and IF-3, IF-1 and N-formylmethionyl-tRNA(fMet); mRNA recruitment can occur at any time during PIC assembly.

The protein localises to the cytoplasm. One of the essential components for the initiation of protein synthesis. Stabilizes the binding of IF-2 and IF-3 on the 30S subunit to which N-formylmethionyl-tRNA(fMet) subsequently binds. Helps modulate mRNA selection, yielding the 30S pre-initiation complex (PIC). Upon addition of the 50S ribosomal subunit IF-1, IF-2 and IF-3 are released leaving the mature 70S translation initiation complex. This chain is Translation initiation factor IF-1, found in Sulfurimonas denitrificans (strain ATCC 33889 / DSM 1251) (Thiomicrospira denitrificans (strain ATCC 33889 / DSM 1251)).